Reading from the N-terminus, the 658-residue chain is Squalene--hopene cyclase (658 aa).

The stretch at 69 to 110 (EAKIGRYLRRIQGEHGGWSLFYGGDLDLSATVKAYFALKMIG) is one PFTB 1 repeat. Residue Asp-392 is the Proton donor of the active site. PFTB repeat units lie at residues 418 to 459 (KARA…GALL), 486 to 526 (MKAA…NVAA), and 534 to 584 (IQKA…GLMA).

This sequence belongs to the terpene cyclase/mutase family.

The protein localises to the cell membrane. It catalyses the reaction squalene = hop-22(29)-ene. It carries out the reaction squalene + H2O = hopan-22-ol. It participates in secondary metabolite biosynthesis; hopanoid biosynthesis. In terms of biological role, catalyzes the cyclization of squalene into hopene. The polypeptide is Squalene--hopene cyclase (shc) (Zymomonas mobilis subsp. mobilis (strain ATCC 31821 / ZM4 / CP4)).